Here is a 201-residue protein sequence, read N- to C-terminus: Cell division protein SepF (201 aa).

Over residues V27–R38 the composition is skewed to basic and acidic residues. Positions V27–R99 are disordered. Polar residues-rich tracts occupy residues Q43–S54 and D82–I92.

The protein belongs to the SepF family. Homodimer. Interacts with FtsZ.

Its subcellular location is the cytoplasm. Its function is as follows. Cell division protein that is part of the divisome complex and is recruited early to the Z-ring. Probably stimulates Z-ring formation, perhaps through the cross-linking of FtsZ protofilaments. Its function overlaps with FtsA. This Streptococcus agalactiae serotype III (strain NEM316) protein is Cell division protein SepF.